Reading from the N-terminus, the 545-residue chain is MAAKEVVFGNDARVKMLAGVNILANAVKVTLGPKGRNVVLDKSFGSPLITKDGVSVAKEIELEDKFENMGAQMVKEVASKANDAAGDGTTTATVLAQAIVTEGLKAVAAGMNPMDLKRGIDKAVIAAVAELKALSQPCADSKAIAQVATISANSDESIGEIIATAMEKVGKEGVITVEEGQALENELDVVEGMQFDRGYLSPYFINKPETGSVELDHPFVLLVDKKISNIRELLPILEGLAKTGKPLLIVAEDVEGEALATLVVNNMRGIVKVAAVKAPGFGDRRKAMLQDVAILTGGTVIAEEIGLELEKATLEDLGTAKRVVITKDNTTIIDGNGEQAQIEARVSQIKQQIEESTSDYDKEKLQERMAKLAGGVAVIKVGAATEVEMKEKKARVEDALHATRAAVEEGVVPGGGVALVRVASKIAELEVLNEDQKHGVVIALRAMEAPLRQIATNAGEEASVVANTVKNGSGNFGYNAGNDTYGDMLEMGILDPTKVTRCALQFAASIAGLMITTEAMVAEIPQNSAPDMGGMGGMGGMGGMM.

ATP contacts are provided by residues 30-33, Lys51, 87-91, Gly415, and Asp495; these read TLGP and DGTTT.

The protein belongs to the chaperonin (HSP60) family. As to quaternary structure, forms a cylinder of 14 subunits composed of two heptameric rings stacked back-to-back. Interacts with the co-chaperonin GroES.

The protein resides in the cytoplasm. It catalyses the reaction ATP + H2O + a folded polypeptide = ADP + phosphate + an unfolded polypeptide.. Together with its co-chaperonin GroES, plays an essential role in assisting protein folding. The GroEL-GroES system forms a nano-cage that allows encapsulation of the non-native substrate proteins and provides a physical environment optimized to promote and accelerate protein folding. This Shewanella putrefaciens (strain CN-32 / ATCC BAA-453) protein is Chaperonin GroEL.